Consider the following 444-residue polypeptide: N-succinylarginine dihydrolase (444 aa).

Substrate is bound by residues 19-28, Asn-110, and 137-138; these read AGLSFGNVAS and HR. Glu-174 is a catalytic residue. Position 214 (Arg-214) interacts with substrate. The active site involves His-250. Residues Asp-252 and Asn-362 each contribute to the substrate site. Cys-368 acts as the Nucleophile in catalysis.

Belongs to the succinylarginine dihydrolase family. Homodimer.

The enzyme catalyses N(2)-succinyl-L-arginine + 2 H2O + 2 H(+) = N(2)-succinyl-L-ornithine + 2 NH4(+) + CO2. It functions in the pathway amino-acid degradation; L-arginine degradation via AST pathway; L-glutamate and succinate from L-arginine: step 2/5. In terms of biological role, catalyzes the hydrolysis of N(2)-succinylarginine into N(2)-succinylornithine, ammonia and CO(2). This Shewanella frigidimarina (strain NCIMB 400) protein is N-succinylarginine dihydrolase.